Reading from the N-terminus, the 318-residue chain is Ubiquitin-like domain-containing CTD phosphatase 1 (318 aa).

The residue at position 2 (Ala-2) is an N-acetylalanine. The 79-residue stretch at 3–81 folds into the Ubiquitin-like domain; it reads LPIIVKWGGQ…IMMMGTREES (79 aa). Lys-117 carries the post-translational modification N6-acetyllysine. The 162-residue stretch at 133–294 folds into the FCP1 homology domain; that stretch reads PREGKKLLVL…LKLTQYLKEI (162 aa). Mg(2+) is bound by residues Asp-143, Asp-145, and Asp-253.

Mg(2+) is required as a cofactor.

It is found in the nucleus. The catalysed reaction is O-phospho-L-seryl-[protein] + H2O = L-seryl-[protein] + phosphate. It catalyses the reaction O-phospho-L-threonyl-[protein] + H2O = L-threonyl-[protein] + phosphate. Its function is as follows. Dephosphorylates 26S nuclear proteasomes, thereby decreasing their proteolytic activity. Recruited to the 19S regulatory particle of the 26S proteasome through its interaction with 19S component PSMD2/RPN1. Once recruited, dephosphorylates 19S component PSMC2/RPT1 which impairs PSMC2 ATPase activity and disrupts 26S proteasome assembly. Has also been reported to stimulate the proteolytic activity of the 26S proteasome. This chain is Ubiquitin-like domain-containing CTD phosphatase 1 (UBLCP1), found in Bos taurus (Bovine).